Reading from the N-terminus, the 380-residue chain is Anthranilate phosphoribosyltransferase (380 aa).

Residues G109, N119, S121, T122, K142, S144, and S146 each coordinate 5-phospho-alpha-D-ribose 1-diphosphate. Mg(2+)-binding residues include D258 and E259.

The protein belongs to the anthranilate phosphoribosyltransferase family. As to quaternary structure, homodimer. It depends on Mg(2+) as a cofactor.

It carries out the reaction N-(5-phospho-beta-D-ribosyl)anthranilate + diphosphate = 5-phospho-alpha-D-ribose 1-diphosphate + anthranilate. Its pathway is amino-acid biosynthesis; L-tryptophan biosynthesis; L-tryptophan from chorismate: step 2/5. Catalyzes the transfer of the phosphoribosyl group of 5-phosphorylribose-1-pyrophosphate (PRPP) to anthranilate to yield N-(5'-phosphoribosyl)-anthranilate (PRA), the second step in tryptophan biosynthesis. The protein is Anthranilate phosphoribosyltransferase of Saccharomyces cerevisiae (strain ATCC 204508 / S288c) (Baker's yeast).